The sequence spans 488 residues: Acetyl-coenzyme A carboxylase carboxyl transferase subunit beta, chloroplastic (488 aa).

One can recognise a CoA carboxyltransferase N-terminal domain in the interval leucine 221 to lysine 488. Zn(2+) is bound by residues cysteine 225, cysteine 228, cysteine 244, and cysteine 247. The segment at cysteine 225 to cysteine 247 adopts a C4-type zinc-finger fold.

The protein belongs to the AccD/PCCB family. In terms of assembly, acetyl-CoA carboxylase is a heterohexamer composed of biotin carboxyl carrier protein, biotin carboxylase and 2 subunits each of ACCase subunit alpha and ACCase plastid-coded subunit beta (accD). It depends on Zn(2+) as a cofactor.

It is found in the plastid. The protein localises to the chloroplast stroma. It catalyses the reaction N(6)-carboxybiotinyl-L-lysyl-[protein] + acetyl-CoA = N(6)-biotinyl-L-lysyl-[protein] + malonyl-CoA. Its pathway is lipid metabolism; malonyl-CoA biosynthesis; malonyl-CoA from acetyl-CoA: step 1/1. Its function is as follows. Component of the acetyl coenzyme A carboxylase (ACC) complex. Biotin carboxylase (BC) catalyzes the carboxylation of biotin on its carrier protein (BCCP) and then the CO(2) group is transferred by the transcarboxylase to acetyl-CoA to form malonyl-CoA. The polypeptide is Acetyl-coenzyme A carboxylase carboxyl transferase subunit beta, chloroplastic (Aethionema grandiflorum (Persian stone-cress)).